The sequence spans 129 residues: Glycine cleavage system H protein (129 aa).

Residues 24-106 form the Lipoyl-binding domain; sequence TYTVGITEHA…YAGGWIFKIK (83 aa). Lys65 carries the N6-lipoyllysine modification.

It belongs to the GcvH family. The glycine cleavage system is composed of four proteins: P, T, L and H. (R)-lipoate serves as cofactor.

The glycine cleavage system catalyzes the degradation of glycine. The H protein shuttles the methylamine group of glycine from the P protein to the T protein. In Citrobacter koseri (strain ATCC BAA-895 / CDC 4225-83 / SGSC4696), this protein is Glycine cleavage system H protein.